A 129-amino-acid chain; its full sequence is Small ribosomal subunit protein uS11 (129 aa).

The protein belongs to the universal ribosomal protein uS11 family. As to quaternary structure, part of the 30S ribosomal subunit. Interacts with proteins S7 and S18. Binds to IF-3.

Located on the platform of the 30S subunit, it bridges several disparate RNA helices of the 16S rRNA. Forms part of the Shine-Dalgarno cleft in the 70S ribosome. The sequence is that of Small ribosomal subunit protein uS11 from Pseudomonas fluorescens (strain ATCC BAA-477 / NRRL B-23932 / Pf-5).